We begin with the raw amino-acid sequence, 276 residues long: Undecaprenyl-diphosphatase 1 (276 aa).

5 helical membrane-spanning segments follow: residues 85–105, 108–128, 187–207, 217–237, and 253–273; these read MNVV…EKTI, VLFA…VILW, VATE…TLYE, VDSI…AFAC, and FAWY…SGWI.

It belongs to the UppP family.

It localises to the cell inner membrane. The enzyme catalyses di-trans,octa-cis-undecaprenyl diphosphate + H2O = di-trans,octa-cis-undecaprenyl phosphate + phosphate + H(+). Its function is as follows. Catalyzes the dephosphorylation of undecaprenyl diphosphate (UPP). Confers resistance to bacitracin. The polypeptide is Undecaprenyl-diphosphatase 1 (Burkholderia thailandensis (strain ATCC 700388 / DSM 13276 / CCUG 48851 / CIP 106301 / E264)).